We begin with the raw amino-acid sequence, 429 residues long: Enolase (429 aa).

Residue Gln-165 coordinates (2R)-2-phosphoglycerate. Residue Glu-207 is the Proton donor of the active site. Asp-244, Glu-287, and Asp-314 together coordinate Mg(2+). (2R)-2-phosphoglycerate-binding residues include Lys-339, Arg-368, Ser-369, and Lys-390. Lys-339 functions as the Proton acceptor in the catalytic mechanism.

The protein belongs to the enolase family. Mg(2+) serves as cofactor.

The protein resides in the cytoplasm. Its subcellular location is the secreted. It localises to the cell surface. The enzyme catalyses (2R)-2-phosphoglycerate = phosphoenolpyruvate + H2O. It functions in the pathway carbohydrate degradation; glycolysis; pyruvate from D-glyceraldehyde 3-phosphate: step 4/5. Catalyzes the reversible conversion of 2-phosphoglycerate (2-PG) into phosphoenolpyruvate (PEP). It is essential for the degradation of carbohydrates via glycolysis. The chain is Enolase from Roseiflexus sp. (strain RS-1).